Consider the following 310-residue polypeptide: MAGAAPTTAFGQAVIGPPGSGKTTYCLGMSEFLRALGRRVAVVNLDPANEGLPYECAVDVGELVGLGDVMDALRLGPNGGLLYCMEYLEANLDWLRAKLDPLRGHYFLFDCPGQVELCTHHGALRSIFSQMAQWDLRLTAVHLVDSHYCTDPAKFISVLCTSLATMLHVELPHINLLSKMDLIEHYGKLAFNLDYYTEVLDLSYLLDHLASDPFFRHYRQLNEKLVQLIEDYSLVSFIPLNIQDKESIQRVLQAVDKANGYCFRAQEQRSLEAMMSAAMGADFHFSSTLGIQEKYLAPSNQSVEQEAMQL.

N-acetylalanine is present on Ala2. 19–24 (GSGKTT) is a GTP binding site. A Gly-Pro-Asn (GPN)-loop; involved in dimer interface motif is present at residues 76–78 (GPN). 178–181 (SKMD) is a GTP binding site.

The protein belongs to the GPN-loop GTPase family. In terms of assembly, heterodimers with GPN1 or GPN3. Binds to RNA polymerase II (RNAPII).

In terms of biological role, small GTPase required for proper localization of RNA polymerase II and III (RNAPII and RNAPIII). May act at an RNAP assembly step prior to nuclear import. This Homo sapiens (Human) protein is GPN-loop GTPase 2.